The following is a 290-amino-acid chain: 4-hydroxybenzoate octaprenyltransferase (290 aa).

The next 8 helical transmembrane spans lie at 23–43 (IGALLLLWPTLWALWVATPGM), 46–66 (LWILAVFVAGVWLMRAAGCVV), 99–119 (LFVVLVLLAFLLVLTLNAMTI), 141–161 (LPQVVLGAAFGWSIPMAFAAV), 163–183 (ESLPLSCWLMFLANILWAVAY), 212–232 (TLIIGILQLGVMALMALIGWL), 233–253 (NGLGWGYYWAVLVAGALFVYQ), and 268–288 (AFMNNNYVGLVLFLGLAMSYW).

It belongs to the UbiA prenyltransferase family. The cofactor is Mg(2+).

The protein resides in the cell inner membrane. It catalyses the reaction all-trans-octaprenyl diphosphate + 4-hydroxybenzoate = 4-hydroxy-3-(all-trans-octaprenyl)benzoate + diphosphate. Its pathway is cofactor biosynthesis; ubiquinone biosynthesis. Its function is as follows. Catalyzes the prenylation of para-hydroxybenzoate (PHB) with an all-trans polyprenyl group. Mediates the second step in the final reaction sequence of ubiquinone-8 (UQ-8) biosynthesis, which is the condensation of the polyisoprenoid side chain with PHB, generating the first membrane-bound Q intermediate 3-octaprenyl-4-hydroxybenzoate. This Salmonella typhi protein is 4-hydroxybenzoate octaprenyltransferase.